The following is a 121-amino-acid chain: MIQMQTVLEVADNSGARKVMCIKVLGGSHRRYARVGDVIKVSVKDAIPRSKVKKGAVMRAVVVRTAQGVRRDDGSLIRFDDNAAVLLNNQNEPIGTRIFGPVTRELRERFMKIISLAAEVL.

The protein belongs to the universal ribosomal protein uL14 family. In terms of assembly, part of the 50S ribosomal subunit. Forms a cluster with proteins L3 and L19. In the 70S ribosome, L14 and L19 interact and together make contacts with the 16S rRNA in bridges B5 and B8.

Functionally, binds to 23S rRNA. Forms part of two intersubunit bridges in the 70S ribosome. In Legionella pneumophila (strain Paris), this protein is Large ribosomal subunit protein uL14.